A 302-amino-acid chain; its full sequence is Probable alpha-L-glutamate ligase (302 aa).

Residues 112-294 (LQLLLKTGVP…IAAEIIDYIE (183 aa)) form the ATP-grasp domain. Residues lysine 148, 185-186 (DF), aspartate 194, and 218-220 (RAN) contribute to the ATP site. Residues aspartate 255, glutamate 267, and asparagine 269 each contribute to the Mg(2+) site. Aspartate 255, glutamate 267, and asparagine 269 together coordinate Mn(2+).

This sequence belongs to the RimK family. It depends on Mg(2+) as a cofactor. Mn(2+) is required as a cofactor.

In Haemophilus influenzae (strain 86-028NP), this protein is Probable alpha-L-glutamate ligase.